Consider the following 365-residue polypeptide: Cytochrome P450 71A3 (365 aa).

This sequence belongs to the cytochrome P450 family. The cofactor is heme.

Functionally, may have a role in maturation, such as during flavor formation or other metabolite production specific to aging tissues. This chain is Cytochrome P450 71A3 (CYP71A3), found in Solanum melongena (Eggplant).